We begin with the raw amino-acid sequence, 130 residues long: Small ribosomal subunit protein uS8 (130 aa).

It belongs to the universal ribosomal protein uS8 family. Part of the 30S ribosomal subunit. Contacts proteins S5 and S12.

Functionally, one of the primary rRNA binding proteins, it binds directly to 16S rRNA central domain where it helps coordinate assembly of the platform of the 30S subunit. The chain is Small ribosomal subunit protein uS8 from Vibrio parahaemolyticus serotype O3:K6 (strain RIMD 2210633).